We begin with the raw amino-acid sequence, 177 residues long: Large ribosomal subunit protein uL6 (177 aa).

It belongs to the universal ribosomal protein uL6 family. In terms of assembly, part of the 50S ribosomal subunit.

In terms of biological role, this protein binds to the 23S rRNA, and is important in its secondary structure. It is located near the subunit interface in the base of the L7/L12 stalk, and near the tRNA binding site of the peptidyltransferase center. The polypeptide is Large ribosomal subunit protein uL6 (Rhizobium etli (strain ATCC 51251 / DSM 11541 / JCM 21823 / NBRC 15573 / CFN 42)).